A 302-amino-acid chain; its full sequence is Probable alpha-L-glutamate ligase (302 aa).

One can recognise an ATP-grasp domain in the interval 104–287 (MQLLSREGVG…VAGMIIEFIE (184 aa)). ATP is bound by residues K141, 178–179 (EF), D187, and 211–213 (RSN). Residues D248, E260, and N262 each coordinate Mg(2+). D248, E260, and N262 together coordinate Mn(2+).

Belongs to the RimK family. It depends on Mg(2+) as a cofactor. Requires Mn(2+) as cofactor.

This chain is Probable alpha-L-glutamate ligase, found in Halorhodospira halophila (strain DSM 244 / SL1) (Ectothiorhodospira halophila (strain DSM 244 / SL1)).